An 859-amino-acid polypeptide reads, in one-letter code: MGRKLDLSGLTDDETEHVLQVVQRDFNLRKKEEERLSELKQKLDEEGSKCSILSKHQQFVEHCCMRCCSPFTFLVNTKRQCGDCKFNVCKSCCSYQKHEKAWVCCVCQQARLLRAQSLEWFYNNVKSRFKRFGSAKVLKNLYRKHRLESGACFDILGGSLFESNLENEGSISGSDSTFYRQSEGHSVMDTLAVALRVAEEAIEEAISKAEAYGDSLDKQNEASYLRDHKEELTEELATTILQKIIRKQKSKSEQQVEEEPGWPHPQSCSTKVADEGTSASPGGYRAPAALWRSQSAFSITGEEALKTPPVEAPSRQPRDQGQHPRAESALPSWKSVDRLDETNLAPVLQSPDGNWVALKDGAPPPTRLLAKPKSGTFQALEVASSVASAYDEMGSDSEEDFDWSEALSKLCPRSRALPRNPQPQPTQAQSSDQGPIAASPSSALSPNPEAMCSDSETSSAGSSREVGHQARLSWLQRKAPRNPAAEKMRLHGELDVNFNPQLASRETSDSSEPEEAPHTTDRRARRWRRARLGSEEPSKEPSSPSAQLRDLDTHQVSDDLSETDISNEARDPQTLTDTTEEKRRNRLYELAMKMSEKETSSGEDQESEPKTESENQKESLSSEDNSQSVQEELKKKFSAVSLCNISTEVLKVINATEELIAGSTGPWESPQVPPDRQKGMFPRGTDQVRLDEQLTSLEENVYLAAGTVYGLETQLTELEDAARCIHSGTDETHLADLEDQVATAAAQVHHAELQISDIESRISALTIAGLNIAPCVRFTRRRDQKQRTQVQTIDTSRQQRRKLPAPPVKAEKIETSSVTTIKTFNHNFILQGSSTNRTKERKGTTKDLMEPALESAVMY.

The region spanning 4-124 is the RabBD domain; sequence KLDLSGLTDD…AQSLEWFYNN (121 aa). The segment at 63 to 105 adopts an FYVE-type zinc-finger fold; it reads CCMRCCSPFTFLVNTKRQCGDCKFNVCKSCCSYQKHEKAWVCC. The tract at residues 143–560 is myosin-binding; sequence RKHRLESGAC…LDTHQVSDDL (418 aa). The tract at residues 193–209 is PKA-binding; the sequence is VALRVAEEAIEEAISKA. Positions 232–248 are negative regulation of PKA-binding; sequence LTEELATTILQKIIRKQ. Positions 251–285 are disordered; sequence KSEQQVEEEPGWPHPQSCSTKVADEGTSASPGGYR. Ser298 carries the phosphoserine modification. Disordered regions lie at residues 302–374, 386–629, and 783–812; these read EEAL…KPKS, VASA…SQSV, and DQKQ…KAEK. The span at 316 to 326 shows a compositional bias: basic and acidic residues; that stretch reads QPRDQGQHPRA. Ser350 carries the post-translational modification Phosphoserine. Residues 393–403 show a composition bias toward acidic residues; that stretch reads MGSDSEEDFDW. Residues 435-450 show a composition bias toward low complexity; the sequence is PIAASPSSALSPNPEA. Composition is skewed to basic and acidic residues over residues 484 to 494 and 607 to 617; these read AAEKMRLHGEL and SEPKTESENQK. The interval 495–856 is actin-binding; that stretch reads DVNFNPQLAS…DLMEPALESA (362 aa). Polar residues-rich tracts occupy residues 618–629 and 787–796; these read ESLSSEDNSQSV and RTQVQTIDTS.

As to quaternary structure, binds MYO5A, MYO7A and F-actin. Binds RAB27A that has been activated by GTP-binding via its N-terminus. Interacts with PRKAR2A. Interacts with components of the exocyst complex, including EXOC3 and EXOC4. Detected in brain, skin, heart, adrenal medulla, pancreas, intestine, liver, kidney, muscle and testis.

The protein localises to the cytoplasm. Its subcellular location is the perinuclear region. It is found in the cytoplasmic vesicle. The protein resides in the secretory vesicle. In terms of biological role, rab effector protein involved in melanosome transport. Serves as link between melanosome-bound RAB27A and the motor proteins MYO5A and MYO7A. May link RAB27A-containing vesicles to actin filaments. Functions as a protein kinase A-anchoring protein (AKAP). May act as a scaffolding protein that links PKA to components of the exocytosis machinery, thus facilitating exocytosis, including insulin release. This chain is Rab effector MyRIP (MYRIP), found in Homo sapiens (Human).